The sequence spans 274 residues: NAD(P)H dehydrogenase [quinone] 1 (274 aa).

FAD is bound by residues His12, 18–19 (FN), and Gln67. At Ser82 the chain carries Phosphoserine. 104–107 (LQWF) provides a ligand contact to FAD. 126-128 (AYT) is a binding site for substrate. FAD contacts are provided by residues 148 to 151 (TTGG), Tyr156, and Arg201. The tract at residues 225-274 (PSSLFDLNFQAGFLMKKEVQDEEKNKKFGLSVGHHLGKSIPTDNQIKARK) is important for apoenzyme conformational stability. Glycyl lysine isopeptide (Lys-Gly) (interchain with G-Cter in SUMO2) cross-links involve residues Lys250 and Lys251.

It belongs to the NAD(P)H dehydrogenase (quinone) family. Homodimer. Interacts with PDLIM4 isoform 2; this interaction stabilizes PDLIM4 isoform 2 in response to oxidative stress and protects it from ubiquitin-independent degradation by the core 20S proteasome. Interacts with TP73 (via SAM domain); this interaction is NADH-dependent, stabilizes TP73 in response to oxidative stress and protects it from ubiquitin-independent degradation by the 20S proteasome. Interacts with TP53; this interaction is NADH-dependent, stabilizes TP53 in response to oxidative stress and protects it from ubiquitin-independent degradation by the 20S proteasome. The cofactor is FAD.

Its subcellular location is the cytoplasm. It is found in the cytosol. It catalyses the reaction a quinone + NADH + H(+) = a quinol + NAD(+). It carries out the reaction a quinone + NADPH + H(+) = a quinol + NADP(+). The enzyme catalyses ubiquinone-10 + NADH + H(+) = ubiquinol-10 + NAD(+). The catalysed reaction is menadione + NADH + H(+) = menadiol + NAD(+). In terms of biological role, flavin-containing quinone reductase that catalyzes two-electron reduction of quinones to hydroquinones using either NADH or NADPH as electron donors. In a ping-pong kinetic mechanism, the electrons are sequentially transferred from NAD(P)H to flavin cofactor and then from reduced flavin to the quinone, bypassing the formation of semiquinone and reactive oxygen species. Regulates cellular redox state primarily through quinone detoxification. Reduces components of plasma membrane redox system such as coenzyme Q and vitamin quinones, producing antioxidant hydroquinone forms. In the process may function as superoxide scavenger to prevent hydroquinone oxidation and facilitate excretion. Alternatively, can activate quinones and their derivatives by generating redox reactive hydroquinones with DNA cross-linking antitumor potential. Acts as a gatekeeper of the core 20S proteasome known to degrade proteins with unstructured regions. Upon oxidative stress, interacts with tumor suppressors TP53 and TP73 in a NADH-dependent way and inhibits their ubiquitin-independent degradation by the 20S proteasome. In Pongo abelii (Sumatran orangutan), this protein is NAD(P)H dehydrogenase [quinone] 1 (NQO1).